Here is a 485-residue protein sequence, read N- to C-terminus: MNEELKDLTPKQTVAELDKYIIGQNKAKRAVAIALRNRMRRLKLPEEIRDEIAPKNILMIGPTGVGKTEIARRLAKLSGAPFLKVEATKYTEVGYVGRDVESMIRDLMAVGYTMVKSEMQEKLKEQAEKNTEESLLDLLLPGSNKKKTAATSAQPQDVSQASSGTTISLPSVSSTAQAEEHKAQNENDMSGTREKFRVMLRENKLEDKMVEVTISPSMGTPTFEFFAGGSNMEDIESAMSNISSMLMGGAKSKRKNVSVKEAREIIMAEQLDRMVDHDKVTDEAKQRVEQMGIIFIDEIDKVASRSDRGGGPDVSREGVQRDILPIVEGSKVSTKYGVVDTRHILFIAAGAFSVSKPSDLIPEFQGRFPLRVELEALHAEDFKRILLEPKNALTKQYAELLETEGVKIEFLDEAIDRMSFLAADVNSKNENIGARRLHTIMEMLLEDISFNASEMGGETVKIDVAYVDERLKDIVQDQDLSRYIL.

Residues I22 and 64–69 contribute to the ATP site; that span reads GVGKTE. Positions 146 to 189 are disordered; that stretch reads KKTAATSAQPQDVSQASSGTTISLPSVSSTAQAEEHKAQNENDM. A compositionally biased stretch (polar residues) spans 149–177; it reads AATSAQPQDVSQASSGTTISLPSVSSTAQ. Positions 178 to 189 are enriched in basic and acidic residues; sequence AEEHKAQNENDM. Positions 297, 363, and 435 each coordinate ATP.

It belongs to the ClpX chaperone family. HslU subfamily. As to quaternary structure, a double ring-shaped homohexamer of HslV is capped on each side by a ring-shaped HslU homohexamer. The assembly of the HslU/HslV complex is dependent on binding of ATP.

The protein resides in the cytoplasm. In terms of biological role, ATPase subunit of a proteasome-like degradation complex; this subunit has chaperone activity. The binding of ATP and its subsequent hydrolysis by HslU are essential for unfolding of protein substrates subsequently hydrolyzed by HslV. HslU recognizes the N-terminal part of its protein substrates and unfolds these before they are guided to HslV for hydrolysis. In Treponema denticola (strain ATCC 35405 / DSM 14222 / CIP 103919 / JCM 8153 / KCTC 15104), this protein is ATP-dependent protease ATPase subunit HslU.